The sequence spans 414 residues: Arrestin domain-containing protein 3 (414 aa).

2 short sequence motifs (PPxY motif) span residues 346–349 (PPSY) and 391–394 (PPLY). Positions 393-414 (LYSEIDPNPDQSSEDRPSCPSR) are disordered. The segment covering 405–414 (SEDRPSCPSR) has biased composition (basic and acidic residues).

This sequence belongs to the arrestin family. Interacts (via PPxY motifs) with NEDD4 (via WW domains). Interacts with ADRB2. Interacts with ADRB3. Interacts with HGS (via PPxY motifs). Does not bind TXN (thioredoxin). Interacts with ITCH. Detected in visceral fat, subcutaneous fat, brown fat and skeletal muscle, and at lower levels in kidney.

Its subcellular location is the cytoplasm. It is found in the cell membrane. It localises to the lysosome. The protein localises to the endosome. The protein resides in the early endosome. Functionally, adapter protein that plays a role in regulating cell-surface expression of adrenergic receptors and probably also other G protein-coupled receptors. Plays a role in NEDD4-mediated ubiquitination and endocytosis af activated ADRB2 and subsequent ADRB2 degradation. May recruit NEDD4 to ADRB2. Alternatively, may function as adapter protein that does not play a major role in recruiting NEDD4 to ADRB2, but rather plays a role in a targeting ADRB2 to endosomes. This chain is Arrestin domain-containing protein 3 (Arrdc3), found in Mus musculus (Mouse).